The sequence spans 203 residues: Large ribosomal subunit protein bL25 (203 aa).

The segment at 182-203 is disordered; sequence EITEEPETEEKKEEGASSVSNS.

The protein belongs to the bacterial ribosomal protein bL25 family. CTC subfamily. In terms of assembly, part of the 50S ribosomal subunit; part of the 5S rRNA/L5/L18/L25 subcomplex. Contacts the 5S rRNA. Binds to the 5S rRNA independently of L5 and L18.

In terms of biological role, this is one of the proteins that binds to the 5S RNA in the ribosome where it forms part of the central protuberance. This chain is Large ribosomal subunit protein bL25, found in Caldicellulosiruptor saccharolyticus (strain ATCC 43494 / DSM 8903 / Tp8T 6331).